Consider the following 81-residue polypeptide: Photosystem I iron-sulfur center (81 aa).

4Fe-4S ferredoxin-type domains follow at residues 2-31 (SHSV…MVPW) and 37-68 (GQIA…VRVY). The [4Fe-4S] cluster site is built by Cys11, Cys14, Cys17, Cys21, Cys48, Cys51, Cys54, and Cys58.

The cyanobacterial PSI reaction center is composed of one copy each of PsaA,B,C,D,E,F,I,J,K,L,M and X, and forms trimeric complexes. [4Fe-4S] cluster serves as cofactor.

It is found in the cellular thylakoid membrane. It carries out the reaction reduced [plastocyanin] + hnu + oxidized [2Fe-2S]-[ferredoxin] = oxidized [plastocyanin] + reduced [2Fe-2S]-[ferredoxin]. In terms of biological role, apoprotein for the two 4Fe-4S centers FA and FB of photosystem I (PSI); essential for photochemical activity. FB is the terminal electron acceptor of PSI, donating electrons to ferredoxin. The C-terminus interacts with PsaA/B/D and helps assemble the protein into the PSI complex. Required for binding of PsaD and PsaE to PSI. PSI is a plastocyanin/cytochrome c6-ferredoxin oxidoreductase, converting photonic excitation into a charge separation, which transfers an electron from the donor P700 chlorophyll pair to the spectroscopically characterized acceptors A0, A1, FX, FA and FB in turn. The sequence is that of Photosystem I iron-sulfur center from Trichodesmium erythraeum (strain IMS101).